The chain runs to 390 residues: Terminal nucleotidyltransferase 5C (390 aa).

Belongs to the TENT family.

It localises to the nucleus. Its subcellular location is the cytoplasm. The protein resides in the cytoskeleton. It is found in the microtubule organizing center. The protein localises to the centrosome. It catalyses the reaction RNA(n) + ATP = RNA(n)-3'-adenine ribonucleotide + diphosphate. Its function is as follows. Catalyzes the transfer of one adenosine molecule from an ATP to an mRNA poly(A) tail bearing a 3'-OH terminal group and enhances mRNA stability and gene expression. The sequence is that of Terminal nucleotidyltransferase 5C from Gallus gallus (Chicken).